A 214-amino-acid polypeptide reads, in one-letter code: Thymidylate kinase (214 aa).

Residue 10 to 17 coordinates ATP; sequence GGEGAGKS.

Belongs to the thymidylate kinase family.

It carries out the reaction dTMP + ATP = dTDP + ADP. Phosphorylation of dTMP to form dTDP in both de novo and salvage pathways of dTTP synthesis. This chain is Thymidylate kinase, found in Brucella canis (strain ATCC 23365 / NCTC 10854 / RM-666).